The following is a 140-amino-acid chain: Lymphocyte antigen 6H (140 aa).

The signal sequence occupies residues 1–25 (MLPAAMKGLGLALLAVLLCSAPAHG). The region spanning 26 to 91 (LWCQDCTLTT…RHFFSDYLMG (66 aa)) is the UPAR/Ly6 domain. Cystine bridges form between C28/C52, C31/C40, C45/C73, C77/C104, and C105/C110. N-linked (GlcNAc...) asparagine glycosylation is present at N36. A lipid anchor (GPI-anchor amidated glycine) is attached at G115. The propeptide at 116–140 (AGHSPWALAGGLLLSLGPALLWAGP) is removed in mature form.

Interacts with CHRNA4 and CHRNA7. In terms of tissue distribution, highly expressed in brain (cerebral cortex, amygdala, hippocampus and subthalamic nucleus) and in acute human leukemic cell line MOLT-3. Also found in lower levels in testis, pancreas, small intestine and colon.

The protein localises to the cell membrane. Functionally, believed to act as a modulator of nicotinic acetylcholine receptors (nAChRs) activity. In vitro inhibits alpha-3:beta-4-containing nAChRs maximum response. May play a role in the intracellular trafficking of alpha-7-containing nAChRs and may inhibit their expression at the cell surface. Seems to inhibit alpha-7/CHRNA7 signaling in hippocampal neurons. The chain is Lymphocyte antigen 6H (LY6H) from Homo sapiens (Human).